The sequence spans 183 residues: Ribosome rescue factor SmrB (183 aa).

The 76-residue stretch at 98 to 173 (LDLHGLTQLQ…GDAALLVLIE (76 aa)) folds into the Smr domain.

This sequence belongs to the SmrB family. Associates with collided ribosomes, but not with correctly translating polysomes.

Its function is as follows. Acts as a ribosome collision sensor. Detects stalled/collided disomes (pairs of ribosomes where the leading ribosome is stalled and a second ribosome has collided with it) and endonucleolytically cleaves mRNA at the 5' boundary of the stalled ribosome. Stalled/collided disomes form a new interface (primarily via the 30S subunits) that binds SmrB. Cleaved mRNA becomes available for tmRNA ligation, leading to ribosomal subunit dissociation and rescue of stalled ribosomes. The protein is Ribosome rescue factor SmrB of Shigella dysenteriae serotype 1 (strain Sd197).